The primary structure comprises 360 residues: Galactoside alpha-(1,2)-fucosyltransferase 1 (360 aa).

The Cytoplasmic portion of the chain corresponds to 1-8 (MWAPGHHH). Residues 9–27 (LCLIFLLTCVFACVFFLLI) form a helical; Signal-anchor for type II membrane protein membrane-spanning segment. The Lumenal segment spans residues 28 to 360 (HQNLFHSGLD…GINADLSPLQ (333 aa)). Asparagine 65, asparagine 301, and asparagine 327 each carry an N-linked (GlcNAc...) asparagine glycan.

It belongs to the glycosyltransferase 11 family. As to expression, expressed in brain, intestine and kidney.

It is found in the golgi apparatus. Its subcellular location is the golgi stack membrane. The enzyme catalyses a ganglioside GM1 + GDP-beta-L-fucose = a ganglioside Fuc-GM1 + GDP + H(+). It carries out the reaction a beta-D-galactosyl-(1-&gt;4)-N-acetyl-beta-D-glucosaminyl derivative + GDP-beta-L-fucose = an alpha-L-Fuc-(1-&gt;2)-beta-D-Gal-(1-&gt;4)-beta-D-GlcNAc derivative + GDP + H(+). It catalyses the reaction a ganglioside GA1 + GDP-beta-L-fucose = a ganglioside Fuc-GA1 + GDP + H(+). The catalysed reaction is a beta-D-Gal-(1-&gt;3)-beta-D-GlcNAc-(1-&gt;3)-beta-D-Gal-(1-&gt;4)-beta-D-Glc-(1&lt;-&gt;1')-Cer(d18:1(4E)) + GDP-beta-L-fucose = alpha-L-fucosyl-(1-&gt;2)- beta-D-galactosyl-(1-&gt;3)-N-acetyl-beta-D-glucosaminyl-(1-&gt;3)-beta-D-galactosyl-(1-&gt;4)-beta-D-glucosyl-(1&lt;-&gt;1')-N-acylsphing-4-enine + GDP + H(+). The enzyme catalyses a neolactoside nLc4Cer(d18:1(4E)) + GDP-beta-L-fucose = a neolactoside IV(2)-alpha-Fuc-nLc4Cer(d18:1(4E)) + GDP + H(+). It carries out the reaction beta-D-galactosyl-(1-&gt;3)-N-acetyl-D-galactosamine + GDP-beta-L-fucose = alpha-L-fucosyl-(1-&gt;2)-beta-D-galactosyl-(1-&gt;3)-N-acetyl-D-galactosamine + GDP + H(+). Its pathway is protein modification; protein glycosylation. Functionally, catalyzes the transfer of L-fucose, from a guanosine diphosphate-beta-L-fucose, to the terminal galactose residue of glycoconjugates through an alpha(1,2) linkage leading to H antigen synthesis that is an intermediate substrate in the synthesis of ABO blood group antigens. H antigen is essential for maturation of the glomerular layer of the main olfactory bulb, in cell migration and early cell-cell contacts during tumor associated angiogenesis. Preferentially fucosylates soluble lactose and to a lesser extent, fucosylates glycolipids gangliosides GA1 and GM1a. The protein is Galactoside alpha-(1,2)-fucosyltransferase 1 of Bos taurus (Bovine).